We begin with the raw amino-acid sequence, 93 residues long: MNYVYILKCKDESLYTGWTNNLEKRIKAHNNGCGAKYTRGRGPVKLVYFEFFENKREAQSREYYIKKLTRNQKLQLISSKSIKEENYEKEINL.

Positions 1–75 (MNYVYILKCK…KKLTRNQKLQ (75 aa)) constitute a GIY-YIG domain.

It belongs to the UPF0213 family.

The chain is UPF0213 protein CPE1444 from Clostridium perfringens (strain 13 / Type A).